The primary structure comprises 932 residues: Protein translocase subunit SecA (932 aa).

Residues Gln83, Gly101–Thr105, and Asp491 contribute to the ATP site.

Belongs to the SecA family. Monomer and homodimer. Part of the essential Sec protein translocation apparatus which comprises SecA, SecYEG and auxiliary proteins SecDF. Other proteins may also be involved.

It localises to the cell inner membrane. It is found in the cellular thylakoid membrane. The protein localises to the cytoplasm. It carries out the reaction ATP + H2O + cellular proteinSide 1 = ADP + phosphate + cellular proteinSide 2.. In terms of biological role, part of the Sec protein translocase complex. Interacts with the SecYEG preprotein conducting channel. Has a central role in coupling the hydrolysis of ATP to the transfer of proteins into and across the cell membrane, serving as an ATP-driven molecular motor driving the stepwise translocation of polypeptide chains across the membrane. Functionally, probably participates in protein translocation into and across both the cytoplasmic and thylakoid membranes in cyanobacterial cells. This Cyanothece sp. (strain PCC 7425 / ATCC 29141) protein is Protein translocase subunit SecA.